Consider the following 300-residue polypeptide: Inosose dehydratase (300 aa).

It belongs to the IolE/MocC family. The cofactor is glutathione. Co(2+) is required as a cofactor. Requires Mn(2+) as cofactor.

It catalyses the reaction scyllo-inosose = 3D-3,5/4-trihydroxycyclohexane-1,2-dione + H2O. Functionally, catalyzes the dehydration of inosose (2-keto-myo-inositol, 2KMI or 2,4,6/3,5-pentahydroxycyclohexanone) to 3D-(3,5/4)-trihydroxycyclohexane-1,2-dione (D-2,3-diketo-4-deoxy-epi-inositol). This Mesomycoplasma hyopneumoniae (strain J / ATCC 25934 / NCTC 10110) (Mycoplasma hyopneumoniae) protein is Inosose dehydratase.